The following is a 611-amino-acid chain: Probable methyltransferase PMT1 (611 aa).

The Cytoplasmic portion of the chain corresponds to Met-1–Lys-11. A helical; Signal-anchor for type II membrane protein transmembrane segment spans residues Pro-12 to Gly-32. At Ser-33 to Glu-611 the chain is on the lumenal side. Asn-345 carries N-linked (GlcNAc...) asparagine glycosylation.

It belongs to the methyltransferase superfamily.

The protein resides in the golgi apparatus membrane. This chain is Probable methyltransferase PMT1, found in Arabidopsis thaliana (Mouse-ear cress).